Consider the following 357-residue polypeptide: MKRKVLAMLVPALLVAGAANAAEIYNKDGNKVDFYGKMVGERIWSNTDDNNSENEDTSYARFGVKGESQITSELTGFGQFEYNLDASKPEGSNQEKTRLTFAGLKYNELGSFDYGRNYGVAYDAAAYTDMLVEWGGDSWASADNFMNGRTNGVATYRNSDFFGLVDGLNFAVQYQGKNSNRGVTKQNGDGYALSVDYNIEGFGFVGAYSKSDRTNEQAGDGYGDNAEVWSLAAKYDANNIYAAMMYGETRNMTVLANDHFANKTQNFEAVVQYQFDFGLRPSLGYVYSKGKDLYARDGHKGVDADRVNYIEVGTWYYFNKNMNVYTAYKFNLLDKDDAAITDAATDDQFAVGIVYQF.

Residues 1 to 21 form the signal peptide; sequence MKRKVLAMLVPALLVAGAANA.

The protein belongs to the Gram-negative porin family.

Its subcellular location is the cell outer membrane. In terms of biological role, forms pores that allow passive diffusion of small molecules across the outer membrane. Plays a role in resistance to carbapenems; this carbapenem-resistant, noncarbapenemase-producing clinical isolate has a deletion in ompF and a mutated marR gene that does not induce expression of this protein. However if this gene is overexpressed, or if wild-type marR is introduced, this leads to decreased resistance to the carbapenem antibiotics ertapenem, imipenem and meropenem. This is Outer membrane protein YedS from Escherichia coli.